The following is an 89-amino-acid chain: Small ribosomal subunit protein uS15 (89 aa).

It belongs to the universal ribosomal protein uS15 family. In terms of assembly, part of the 30S ribosomal subunit. Forms a bridge to the 50S subunit in the 70S ribosome, contacting the 23S rRNA.

In terms of biological role, one of the primary rRNA binding proteins, it binds directly to 16S rRNA where it helps nucleate assembly of the platform of the 30S subunit by binding and bridging several RNA helices of the 16S rRNA. Functionally, forms an intersubunit bridge (bridge B4) with the 23S rRNA of the 50S subunit in the ribosome. This is Small ribosomal subunit protein uS15 from Chlamydia felis (strain Fe/C-56) (Chlamydophila felis).